The following is a 792-amino-acid chain: RNA-binding protein RRM4 (792 aa).

The interval 37–60 (TDSTAQASHAAEQTIDAHQQAGDV) is disordered. RRM domains follow at residues 72–145 (PLLY…QDAS), 154–235 (KPRL…IDTA), and 321–398 (CNLF…LHEP). Residues 412 to 424 (AANADNSDMSSNS) are compositionally biased toward low complexity. Disordered regions lie at residues 412–438 (AANA…RQSR) and 630–649 (DESG…APVP). Residues 640-649 (RASSGSAPVP) are compositionally biased toward polar residues. The 78-residue stretch at 715–792 (ATDDFIDSLQ…QHKVAAGLNK (78 aa)) folds into the PABC domain.

It belongs to the polyadenylate-binding protein type-1 family. As to quaternary structure, part of large ribonucleoprotein complexes (mRNPs) containing RNA-binding proteins RRM4 and PAB1, endosome-binding protein UPA1, core scaffold protein UPA2 and associated factor GRP1. Interacts (via PABC domain) with UPA1 (via PAM2 domain).

It localises to the cytoplasm. The protein localises to the cytoskeleton. The protein resides in the endosome. In terms of biological role, key RNA-binding protein involved in the formation of polar-growing hyphae which is essential for infection by the plant pathogen. During filamentation, assembles into particles that shuttle bidirectionally along microtubules to both poles. The RRM4 transport particles are part of the endosomal mRNP transport that regulates polarity of the infectious hyphae by transporting distinct mRNAs encoding, for example, the ubiquitin fusion protein UBI1, the small G protein RHO3, or the septin CDC3, from the nucleus to cell poles. Recognizes a broad spectrum of cargo mRNAs and precisely binds at stop codons, which constitute landmark sites of translation, suggesting an intimate connection of mRNA transport and translation. Also binds to the specific binding motif UAUG of cargo mRNAs via its third RRM. Plus-end-directed KIN3, a kinesin-3 type motor, mediates anterograde transport of RRM4-containing mRNPs whereas split dynein DYM1-DYN2 functions in retrograde movement of mRNPs. The chain is RNA-binding protein RRM4 from Mycosarcoma maydis (Corn smut fungus).